A 253-amino-acid chain; its full sequence is tRNA 2'-phosphotransferase 1 (253 aa).

An N-acetylmethionine modification is found at Met-1. Disordered regions lie at residues 1–29 and 225–253; these read MNFS…DRDV and KPLS…RIQQ. A Phosphoserine modification is found at Ser-240. Positions 243 to 253 are enriched in basic residues; that stretch reads HSSRERRRIQQ.

It belongs to the KptA/TPT1 family. In terms of tissue distribution, widely expressed. Weakly or not expressed in lung, spleen, small intestine and peripheral blood leukocytes.

The catalysed reaction is 2'-phospho-[ligated tRNA] + NAD(+) = mature tRNA + ADP-alpha-D-ribose 1'',2''-cyclic phosphate + nicotinamide. In terms of biological role, catalyzes the last step of tRNA splicing, the transfer of the splice junction 2'-phosphate from ligated tRNA to NAD to produce ADP-ribose 1''-2'' cyclic phosphate. The protein is tRNA 2'-phosphotransferase 1 (TRPT1) of Homo sapiens (Human).